Consider the following 28-residue polypeptide: Ranatuerin-2SEb (28 aa).

A disulfide bridge connects residues C23 and C28.

In terms of tissue distribution, expressed by the skin glands.

The protein resides in the secreted. In terms of biological role, mast cell degranulating peptide. Causes histamine release from rat peritoneal mast cells in vitro. Has antibacterial activity against the Gram-negative bacterium E.coli K12 and Gram-positive bacterium M.luteus NCT C2665. In Lithobates sevosus (Dusky gopher frog), this protein is Ranatuerin-2SEb.